Consider the following 330-residue polypeptide: D-lactate dehydrogenase (330 aa).

NAD(+) is bound by residues 156–157 (RI), Asp-176, 206–207 (VP), 233–235 (AAR), and Asp-259. Residue Arg-235 is part of the active site. The active site involves Glu-264. Catalysis depends on His-296, which acts as the Proton donor.

It belongs to the D-isomer specific 2-hydroxyacid dehydrogenase family.

The enzyme catalyses (R)-lactate + NAD(+) = pyruvate + NADH + H(+). The sequence is that of D-lactate dehydrogenase (ldhD) from Staphylococcus epidermidis (strain ATCC 35984 / DSM 28319 / BCRC 17069 / CCUG 31568 / BM 3577 / RP62A).